The primary structure comprises 79 residues: Serine protease inhibitor Kazal-type 1 (79 aa).

The N-terminal stretch at 1–23 (MKVASIFLLTALVLMSLSGNSGA) is a signal peptide. Residues 26 to 79 (LGREAKCTNEVNGCPRIYNPVCGTDGVTYSNECLLCMENKERQTPVLIQKSGPC) enclose the Kazal-like domain. 3 cysteine pairs are disulfide-bonded: cysteine 32–cysteine 61, cysteine 39–cysteine 58, and cysteine 47–cysteine 79.

Its subcellular location is the secreted. Its function is as follows. Serine protease inhibitor which exhibits anti-trypsin activity. In the pancreas, protects against trypsin-catalyzed premature activation of zymogens. In the male reproductive tract, binds to sperm heads where it modulates sperm capacitance by inhibiting calcium uptake and nitrogen oxide (NO) production. The polypeptide is Serine protease inhibitor Kazal-type 1 (SPINK1) (Bos taurus (Bovine)).